We begin with the raw amino-acid sequence, 94 residues long: Co-chaperonin GroES (94 aa).

The protein belongs to the GroES chaperonin family. Heptamer of 7 subunits arranged in a ring. Interacts with the chaperonin GroEL.

The protein resides in the cytoplasm. Functionally, together with the chaperonin GroEL, plays an essential role in assisting protein folding. The GroEL-GroES system forms a nano-cage that allows encapsulation of the non-native substrate proteins and provides a physical environment optimized to promote and accelerate protein folding. GroES binds to the apical surface of the GroEL ring, thereby capping the opening of the GroEL channel. This is Co-chaperonin GroES from Streptococcus agalactiae serotype III (strain NEM316).